The following is a 718-amino-acid chain: MSEISNRLQILLIDCYDSYTFNLYDLLYKASENACVIVVHWDKMSPDLWEDILQFDAIVVGPGPGHPAEYSSILNRIWQLNIPVMGICLGFQSLALYHGATIERMPNLPWHGRVSSVTTSKTFIFDGISAVKGMRYHSLYANKIPIDSLQILAQSDEDNIVMSIKATKFPHFGILYHPESVGSSKSLKIFKNFLSLADTPNIQCVNSFSKSANGFSHNLNRYDISPAAFILKSGSPSLQIHSVEIPWVEPLALADCIQKSGNPICFLDSAKKPGRYSILGILTGPLARIIHYEKATNTTEIRICKDNSFVRINNDLWSTVADFMNQHKAIKPDTNLPFYGGIMGIIGYECSDLSTKSVSNASFPLDFQQTTVDAELAFVDRSFVFDLEIKKLFVQTLTPLNETCSEWWGELLASTCNTKLDNLSCLHSFDGKQNFGLVQSFPKKEVYCESVKACQEHLLAGDSYEMCLTDTTFVSAPPELSDFEMYMRARSLNPATFAGFVRLNHFTLLCCSPERFLQFRDDRCLFSPIKGTLKREGHMSLEEARKKLLNEKDMGELNMIIDLIRNDLHQLAKKNSVHVPELYSVEEHSNVYSLLSNIYGRIESPITAWDVLSKSFPPGSMTGAPKLRSVRMLEPLEQHGRGIYSGTLGYWDVTGSAEFNVIIRSAFKYKADDYWRIGAGGAVTILSSPEGEYEEMVLKANSILPAFVNLKNKKRSCK.

The Glutamine amidotransferase type-1 domain maps to 9-203 (QILLIDCYDS…LSLADTPNIQ (195 aa)). Residue cysteine 88 is the Nucleophile of the active site. Active-site residues include histidine 177 and glutamate 179. The segment at 266-718 (FLDSAKKPGR…NLKNKKRSCK (453 aa)) is PABB component.

This sequence in the C-terminal section; belongs to the anthranilate synthase component I family.

It localises to the cytoplasm. It is found in the nucleus. It carries out the reaction chorismate + L-glutamine = 4-amino-4-deoxychorismate + L-glutamate. Its pathway is cofactor biosynthesis; tetrahydrofolate biosynthesis; 4-aminobenzoate from chorismate: step 1/2. In terms of biological role, catalyzes the biosynthesis of 4-amino-4-deoxychorismate (ADC) from chorismate and glutamine. Required for the synthesis of 4-aminobenzoate (PABA), an important component in tetrahydrofolate biosynthesis. The polypeptide is Putative aminodeoxychorismate synthase (Schizosaccharomyces pombe (strain 972 / ATCC 24843) (Fission yeast)).